We begin with the raw amino-acid sequence, 196 residues long: Vascular-related unknown protein 2 (196 aa).

Positions 84 to 130 (ANNINTNPKKRRIIHQHKEEEEEELQKGEEEEEDEEDTASSPSNKTK) are disordered. Residues 103–121 (EEEEELQKGEEEEEDEEDT) are compositionally biased toward acidic residues.

Involved in the regulation of plant growth. The protein is Vascular-related unknown protein 2 of Arabidopsis thaliana (Mouse-ear cress).